The chain runs to 148 residues: Lysozyme C (148 aa).

The N-terminal stretch at Met-1 to Gly-18 is a signal peptide. Residues Lys-19–Val-148 form the C-type lysozyme domain. Cystine bridges form between Cys-24/Cys-146, Cys-48/Cys-134, Cys-83/Cys-99, and Cys-95/Cys-113. Catalysis depends on residues Glu-53 and Asp-71.

It belongs to the glycosyl hydrolase 22 family. Monomer.

The protein resides in the secreted. The catalysed reaction is Hydrolysis of (1-&gt;4)-beta-linkages between N-acetylmuramic acid and N-acetyl-D-glucosamine residues in a peptidoglycan and between N-acetyl-D-glucosamine residues in chitodextrins.. In terms of biological role, lysozymes have primarily a bacteriolytic function; those in tissues and body fluids are associated with the monocyte-macrophage system and enhance the activity of immunoagents. This Miopithecus talapoin (Angolan talapoin) protein is Lysozyme C (LYZ).